A 359-amino-acid chain; its full sequence is MDNQKGALFPDEVILQILARLPVKSLFRFKSVCKSWYRLPSDKYFTSLFNQLSVKEQLLVAEVSDSSSLICVDNLRGVSELSLDFVRDRVRIRVSSNGLLCCSSIPEKGVYYVCNPSTREYRKLPKSRERPVTRFYPDGEATLVGLACDLSKNKFNVVLAGYHRSFGQRPDGSFICLVFDSESNKWRKFVSVLEECSFTHMSKNQVVFVNGMLHWLMSGLCYILALDVEHDVWRKISLPDEIRIGNGGGNRVYLLESDGFLSVIQLSDVWMKIWKMSEYETETWSVVDSISLRCIKGLVPGIFPICQTGEYVFLATHKQVLVYQRRSKLWKEMFSVKGSSSLPLWFSAHAFRSTIVPCN.

The F-box domain maps to 3-52; the sequence is NQKGALFPDEVILQILARLPVKSLFRFKSVCKSWYRLPSDKYFTSLFNQL.

In terms of assembly, part of a SCF (SKP1-cullin-F-box) protein ligase complex. Interacts with SKP1A, SKP1B, ASK11, ASK12, ASK13 and ASK14.

Its pathway is protein modification; protein ubiquitination. The polypeptide is F-box protein At5g49610 (Arabidopsis thaliana (Mouse-ear cress)).